The following is a 152-amino-acid chain: MFRGATLVNLDSKGRLAVPTRYREGLIENAAGQLVCTIDIHHPCLLLYPLPEWEVIEQKLSRLSSMNPVERRVQRLLLGHASECQMDNAGRLLIAPVLRQHAGLTKEVMLVGQFNKFELWDETTWYQRVKEDIDAEQSATGELSERLQDLSL.

2 consecutive SpoVT-AbrB domains span residues 5-52 and 81-124; these read ATLV…PLPE and ASEC…DETT.

This sequence belongs to the MraZ family. As to quaternary structure, forms oligomers.

It localises to the cytoplasm. The protein localises to the nucleoid. Functionally, negatively regulates its own expression and that of the subsequent genes in the proximal part of the division and cell wall (dcw) gene cluster. Acts by binding directly to DNA. May also regulate the expression of genes outside the dcw cluster. The polypeptide is Transcriptional regulator MraZ (Klebsiella pneumoniae subsp. pneumoniae (strain ATCC 700721 / MGH 78578)).